The sequence spans 194 residues: Molybdenum cofactor guanylyltransferase (194 aa).

Residues 12–14 (LAG), lysine 25, asparagine 53, aspartate 70, and aspartate 100 each bind GTP. Position 100 (aspartate 100) interacts with Mg(2+).

This sequence belongs to the MobA family. Monomer. The cofactor is Mg(2+).

The protein resides in the cytoplasm. The enzyme catalyses Mo-molybdopterin + GTP + H(+) = Mo-molybdopterin guanine dinucleotide + diphosphate. Transfers a GMP moiety from GTP to Mo-molybdopterin (Mo-MPT) cofactor (Moco or molybdenum cofactor) to form Mo-molybdopterin guanine dinucleotide (Mo-MGD) cofactor. This is Molybdenum cofactor guanylyltransferase from Aliivibrio fischeri (strain ATCC 700601 / ES114) (Vibrio fischeri).